Here is a 190-residue protein sequence, read N- to C-terminus: MELILGSQSSARANLLKEHGIKFEQKALYFDEESLKTTDPREFVYLACKGKLEKAKELLANNCVIVVADSVVSVGNRMQRKAKNKQEALEFLKRQNGNEIEVLTCSALISPVLEWLDLSVFRARLKAFDPSEIEKYLESGLWQESTGCVRLEDFHKPYIKSSSKNLSVGLGLNVESLLGVLKLGAKLSSL.

Asp-69 acts as the Proton acceptor in catalysis.

Belongs to the Maf family. The cofactor is a divalent metal cation.

It localises to the cytoplasm. The enzyme catalyses a ribonucleoside 5'-triphosphate + H2O = a ribonucleoside 5'-phosphate + diphosphate + H(+). The catalysed reaction is a 2'-deoxyribonucleoside 5'-triphosphate + H2O = a 2'-deoxyribonucleoside 5'-phosphate + diphosphate + H(+). Its function is as follows. Nucleoside triphosphate pyrophosphatase. May have a dual role in cell division arrest and in preventing the incorporation of modified nucleotides into cellular nucleic acids. This Helicobacter pylori (strain HPAG1) protein is Nucleoside triphosphate pyrophosphatase.